The primary structure comprises 388 residues: Lipid-A-disaccharide synthase (388 aa).

The protein belongs to the LpxB family.

The catalysed reaction is a lipid X + a UDP-2-N,3-O-bis[(3R)-3-hydroxyacyl]-alpha-D-glucosamine = a lipid A disaccharide + UDP + H(+). Its pathway is bacterial outer membrane biogenesis; LPS lipid A biosynthesis. Its function is as follows. Condensation of UDP-2,3-diacylglucosamine and 2,3-diacylglucosamine-1-phosphate to form lipid A disaccharide, a precursor of lipid A, a phosphorylated glycolipid that anchors the lipopolysaccharide to the outer membrane of the cell. The chain is Lipid-A-disaccharide synthase from Burkholderia mallei (strain NCTC 10247).